A 472-amino-acid chain; its full sequence is Ribosomal protein uS12 methylthiotransferase RimO (472 aa).

The MTTase N-terminal domain occupies 22–133 (PSVAFAHLGC…IVDVLKRVEA (112 aa)). The [4Fe-4S] cluster site is built by Cys31, Cys67, Cys96, Cys171, Cys175, and Cys178. Residues 157-386 (TTDQAVAYLK…MALQQPISAE (230 aa)) enclose the Radical SAM core domain. Residues 389–460 (QRWVGRTIDV…VYDLTGQLVD (72 aa)) enclose the TRAM domain.

This sequence belongs to the methylthiotransferase family. RimO subfamily. The cofactor is [4Fe-4S] cluster.

It localises to the cytoplasm. It carries out the reaction L-aspartate(89)-[ribosomal protein uS12]-hydrogen + (sulfur carrier)-SH + AH2 + 2 S-adenosyl-L-methionine = 3-methylsulfanyl-L-aspartate(89)-[ribosomal protein uS12]-hydrogen + (sulfur carrier)-H + 5'-deoxyadenosine + L-methionine + A + S-adenosyl-L-homocysteine + 2 H(+). Its function is as follows. Catalyzes the methylthiolation of an aspartic acid residue of ribosomal protein uS12. The polypeptide is Ribosomal protein uS12 methylthiotransferase RimO (Prochlorococcus marinus (strain MIT 9303)).